Consider the following 162-residue polypeptide: NADH-quinone oxidoreductase subunit I (162 aa).

2 consecutive 4Fe-4S ferredoxin-type domains span residues 52-82 (LRRY…IEAG) and 93-122 (VRYD…EGPN). Positions 62, 65, 68, 72, 102, 105, 108, and 112 each coordinate [4Fe-4S] cluster.

The protein belongs to the complex I 23 kDa subunit family. In terms of assembly, NDH-1 is composed of 14 different subunits. Subunits NuoA, H, J, K, L, M, N constitute the membrane sector of the complex. Requires [4Fe-4S] cluster as cofactor.

It localises to the cell inner membrane. The enzyme catalyses a quinone + NADH + 5 H(+)(in) = a quinol + NAD(+) + 4 H(+)(out). Functionally, NDH-1 shuttles electrons from NADH, via FMN and iron-sulfur (Fe-S) centers, to quinones in the respiratory chain. The immediate electron acceptor for the enzyme in this species is believed to be ubiquinone. Couples the redox reaction to proton translocation (for every two electrons transferred, four hydrogen ions are translocated across the cytoplasmic membrane), and thus conserves the redox energy in a proton gradient. This chain is NADH-quinone oxidoreductase subunit I, found in Bradyrhizobium sp. (strain ORS 278).